A 158-amino-acid chain; its full sequence is uncharacterized protein (158 aa).

Over residues 1 to 18 (MDLASEITSATQTSSLCS) the composition is skewed to polar residues. Disordered regions lie at residues 1–20 (MDLA…CSSG), 66–94 (LRDL…KPCL), and 111–158 (GSSG…GEEF). A compositionally biased stretch (low complexity) spans 72-90 (RGSTSSSRSPSRPVSTSAS). Polar residues-rich tracts occupy residues 111-120 (GSSGHLQSPG) and 149-158 (LSHSAQGEEF).

This is an uncharacterized protein from Homo sapiens (Human).